The sequence spans 266 residues: Dihydropteroate synthase (266 aa).

Residues 12–260 (AAIMGILNVT…DVKANQDIVA (249 aa)) enclose the Pterin-binding domain. N19 contacts Mg(2+). Residues T59, D93, N112, D176, K212, and 248–250 (RVH) contribute to the (7,8-dihydropterin-6-yl)methyl diphosphate site.

This sequence belongs to the DHPS family. As to quaternary structure, homodimer or homotrimer. Mg(2+) serves as cofactor.

The enzyme catalyses (7,8-dihydropterin-6-yl)methyl diphosphate + 4-aminobenzoate = 7,8-dihydropteroate + diphosphate. It participates in cofactor biosynthesis; tetrahydrofolate biosynthesis; 7,8-dihydrofolate from 2-amino-4-hydroxy-6-hydroxymethyl-7,8-dihydropteridine diphosphate and 4-aminobenzoate: step 1/2. Its function is as follows. Catalyzes the condensation of para-aminobenzoate (pABA) with 6-hydroxymethyl-7,8-dihydropterin diphosphate (DHPt-PP) to form 7,8-dihydropteroate (H2Pte), the immediate precursor of folate derivatives. The protein is Dihydropteroate synthase (folP) of Streptococcus pyogenes serotype M3 (strain ATCC BAA-595 / MGAS315).